The chain runs to 584 residues: Endoribonuclease YBEY, chloroplastic (584 aa).

The N-terminal 50 residues, 1–50 (MLSRVCPTLRYNRIWSAHAREMPRATLLLLQPNFFHSSPKTALVNRLDVT), are a transit peptide targeting the chloroplast. Zn(2+) is bound by residues His-240, His-244, and His-250.

This sequence belongs to the endoribonuclease YbeY family. The cofactor is Zn(2+).

The protein localises to the plastid. It is found in the chloroplast stroma. Its function is as follows. Endoribonuclease required for chloroplast ribosomal RNA (rRNA) processing and essential for normal growth and development. May be involved in maturation of both the 5' and 3' ends of 16S, 23S, and 4.5S rRNAs. Cleaves chloroplast rRNAs, mRNAs and tRNAs in vitro. This Arabidopsis thaliana (Mouse-ear cress) protein is Endoribonuclease YBEY, chloroplastic.